The chain runs to 97 residues: Aspartyl/glutamyl-tRNA(Asn/Gln) amidotransferase subunit C (97 aa).

The protein belongs to the GatC family. In terms of assembly, heterotrimer of A, B and C subunits.

It catalyses the reaction L-glutamyl-tRNA(Gln) + L-glutamine + ATP + H2O = L-glutaminyl-tRNA(Gln) + L-glutamate + ADP + phosphate + H(+). It carries out the reaction L-aspartyl-tRNA(Asn) + L-glutamine + ATP + H2O = L-asparaginyl-tRNA(Asn) + L-glutamate + ADP + phosphate + 2 H(+). Its function is as follows. Allows the formation of correctly charged Asn-tRNA(Asn) or Gln-tRNA(Gln) through the transamidation of misacylated Asp-tRNA(Asn) or Glu-tRNA(Gln) in organisms which lack either or both of asparaginyl-tRNA or glutaminyl-tRNA synthetases. The reaction takes place in the presence of glutamine and ATP through an activated phospho-Asp-tRNA(Asn) or phospho-Glu-tRNA(Gln). The sequence is that of Aspartyl/glutamyl-tRNA(Asn/Gln) amidotransferase subunit C from Prochlorococcus marinus (strain MIT 9303).